The primary structure comprises 615 residues: Sterol 3-beta-glucosyltransferase UGT80B1 (615 aa).

The disordered stretch occupies residues 1–54 (MASNVFDHPLQELEGEDNGVKSEKASLLETSGSVDTTPEDSGHRSSDGHRGLDH). Basic and acidic residues predominate over residues 40–54 (DSGHRSSDGHRGLDH).

It belongs to the glycosyltransferase 28 family. As to expression, expressed in developing seeds, seedlings, leaves and around the apical tip of cotyledons. In embryo, expressed in the seed coat and cotyledons.

It catalyses the reaction a sterol + UDP-alpha-D-glucose = a sterol 3-beta-D-glucoside + UDP + H(+). Functionally, involved in the biosynthesis of sterol glucosides. Catalyzes the synthesis of steryl glycosides (SGs) and acyl steryl glycosides (ASGs) which are the most abundant sterol derivatives in higher plants. Can act on several sterols like sitosterol, campesterol and stigmasterol. Is required for embryonic development, seed suberin accumulation, cutin formation and flavanoid accumulation in the seed coat. Both UGT80A2 and UGT80B1 are required for the normal production of SGs and ASGs in seeds. This Arabidopsis thaliana (Mouse-ear cress) protein is Sterol 3-beta-glucosyltransferase UGT80B1.